Reading from the N-terminus, the 121-residue chain is Large ribosomal subunit protein bL12 (121 aa).

This sequence belongs to the bacterial ribosomal protein bL12 family. Homodimer. Part of the ribosomal stalk of the 50S ribosomal subunit. Forms a multimeric L10(L12)X complex, where L10 forms an elongated spine to which 2 to 4 L12 dimers bind in a sequential fashion. Binds GTP-bound translation factors.

Functionally, forms part of the ribosomal stalk which helps the ribosome interact with GTP-bound translation factors. Is thus essential for accurate translation. The protein is Large ribosomal subunit protein bL12 of Salmonella agona (strain SL483).